A 624-amino-acid chain; its full sequence is tRNA uridine 5-carboxymethylaminomethyl modification enzyme MnmG (624 aa).

FAD is bound at residue 14 to 19; sequence GAGHAG. Position 273–287 (273–287) interacts with NAD(+); that stretch reads GTRYCPSFEDKVVRF.

The protein belongs to the MnmG family. Homodimer. Heterotetramer of two MnmE and two MnmG subunits. Requires FAD as cofactor.

It is found in the cytoplasm. Its function is as follows. NAD-binding protein involved in the addition of a carboxymethylaminomethyl (cmnm) group at the wobble position (U34) of certain tRNAs, forming tRNA-cmnm(5)s(2)U34. This Syntrophomonas wolfei subsp. wolfei (strain DSM 2245B / Goettingen) protein is tRNA uridine 5-carboxymethylaminomethyl modification enzyme MnmG.